Here is a 398-residue protein sequence, read N- to C-terminus: S-adenosylmethionine synthase (398 aa).

A disordered region spans residues 1-21 (MAANRRLFTSESVTEGHPDKM). His17 contacts ATP. A Mg(2+)-binding site is contributed by Asp19. Residue Glu45 coordinates K(+). The L-methionine site is built by Glu58 and Gln101. Positions 101–111 (QSADIAGGVNQ) are flexible loop. Residues 177–179 (DGK), 244–245 (RF), Asp253, 259–260 (RK), Ala276, and Lys280 contribute to the ATP site. Asp253 is a binding site for L-methionine. An L-methionine-binding site is contributed by Lys284.

The protein belongs to the AdoMet synthase family. As to quaternary structure, homotetramer; dimer of dimers. Requires Mg(2+) as cofactor. K(+) serves as cofactor.

It is found in the cytoplasm. It carries out the reaction L-methionine + ATP + H2O = S-adenosyl-L-methionine + phosphate + diphosphate. It functions in the pathway amino-acid biosynthesis; S-adenosyl-L-methionine biosynthesis; S-adenosyl-L-methionine from L-methionine: step 1/1. Its function is as follows. Catalyzes the formation of S-adenosylmethionine (AdoMet) from methionine and ATP. The overall synthetic reaction is composed of two sequential steps, AdoMet formation and the subsequent tripolyphosphate hydrolysis which occurs prior to release of AdoMet from the enzyme. The polypeptide is S-adenosylmethionine synthase (Oceanobacillus iheyensis (strain DSM 14371 / CIP 107618 / JCM 11309 / KCTC 3954 / HTE831)).